The sequence spans 246 residues: Chanoclavine-I dehydrogenase easD (246 aa).

The signal sequence occupies residues 1-20 (MASVSSKIFAITGGASGIGA). Residues Ile-18, Asp-66, Arg-132, Tyr-169, and Lys-173 each contribute to the NADP(+) site. Tyr-169 serves as the catalytic Proton donor. Residue Lys-173 is the Lowers pKa of active site Tyr of the active site.

Belongs to the short-chain dehydrogenases/reductases (SDR) family. As to quaternary structure, homotetramer.

The enzyme catalyses chanoclavine-I + NAD(+) = chanoclavine-I aldehyde + NADH + H(+). It functions in the pathway alkaloid biosynthesis; ergot alkaloid biosynthesis. Its function is as follows. Chanoclavine-I dehydrogenase; part of the gene cluster that mediates the biosynthesis of fungal ergot alkaloid. DmaW catalyzes the first step of ergot alkaloid biosynthesis by condensing dimethylallyl diphosphate (DMAP) and tryptophan to form 4-dimethylallyl-L-tryptophan. The second step is catalyzed by the methyltransferase easF that methylates 4-dimethylallyl-L-tryptophan in the presence of S-adenosyl-L-methionine, resulting in the formation of 4-dimethylallyl-L-abrine. The catalase easC and the FAD-dependent oxidoreductase easE then transform 4-dimethylallyl-L-abrine to chanoclavine-I which is further oxidized by easD in the presence of NAD(+), resulting in the formation of chanoclavine-I aldehyde. Chanoclavine-I aldehyde is the precursor of ergoamides and ergopeptines in Clavicipitaceae, and clavine-type alcaloids such as fumiclavine in Trichocomaceae. However, the metabolites downstream of chanoclavine-I aldehyde in Arthrodermataceae have not been identified yet. This chain is Chanoclavine-I dehydrogenase easD, found in Arthroderma benhamiae (strain ATCC MYA-4681 / CBS 112371) (Trichophyton mentagrophytes).